The chain runs to 550 residues: Glucose-6-phosphate isomerase (550 aa).

Glu356 serves as the catalytic Proton donor. Active-site residues include His387 and Lys515.

It belongs to the GPI family.

The protein localises to the cytoplasm. The catalysed reaction is alpha-D-glucose 6-phosphate = beta-D-fructose 6-phosphate. Its pathway is carbohydrate biosynthesis; gluconeogenesis. It functions in the pathway carbohydrate degradation; glycolysis; D-glyceraldehyde 3-phosphate and glycerone phosphate from D-glucose: step 2/4. Catalyzes the reversible isomerization of glucose-6-phosphate to fructose-6-phosphate. In Vibrio vulnificus (strain YJ016), this protein is Glucose-6-phosphate isomerase.